Here is a 199-residue protein sequence, read N- to C-terminus: Putative HMP/thiamine permease protein YkoE (199 aa).

6 helical membrane-spanning segments follow: residues 9 to 29, 40 to 60, 63 to 83, 85 to 105, 114 to 134, and 143 to 163; these read IVIM…FTHF, IAYE…AYMI, PGAA…LGNP, GPMV…VFLA, PVLM…DLFV, and GYLL…AGLL.

The complex is composed of two ATP-binding proteins (YkoD), two transmembrane proteins (YkoC and YkoE) and a solute-binding protein (YkoF).

Its subcellular location is the cell membrane. Functionally, part of the ABC transporter complex YkoCDEF that could transport hydroxymethylpyrimidine (HMP) and/or thiamine. Could also transport other HMP-containing products. Probably responsible for the translocation of the substrate across the membrane. This Bacillus subtilis (strain 168) protein is Putative HMP/thiamine permease protein YkoE (ykoE).